The chain runs to 193 residues: Probable nicotinate-nucleotide adenylyltransferase (193 aa).

Belongs to the NadD family.

It catalyses the reaction nicotinate beta-D-ribonucleotide + ATP + H(+) = deamido-NAD(+) + diphosphate. It participates in cofactor biosynthesis; NAD(+) biosynthesis; deamido-NAD(+) from nicotinate D-ribonucleotide: step 1/1. Functionally, catalyzes the reversible adenylation of nicotinate mononucleotide (NaMN) to nicotinic acid adenine dinucleotide (NaAD). The sequence is that of Probable nicotinate-nucleotide adenylyltransferase from Flavobacterium psychrophilum (strain ATCC 49511 / DSM 21280 / CIP 103535 / JIP02/86).